The sequence spans 66 residues: uncharacterized protein (66 aa).

Residues 5–59 (LKYYRALHNLTQEDLAKKLGVSRQTIIAIEKGKYDPSLKLAFKIAKFFGVKIEDI) form the HTH cro/C1-type domain. The H-T-H motif DNA-binding region spans 16–35 (QEDLAKKLGVSRQTIIAIEK).

This is an uncharacterized protein from Methanocaldococcus jannaschii (strain ATCC 43067 / DSM 2661 / JAL-1 / JCM 10045 / NBRC 100440) (Methanococcus jannaschii).